The chain runs to 386 residues: ADP,ATP carrier protein, mitochondrial (386 aa).

Residues 1-76 constitute a mitochondrion transit peptide; it reads ADNQHPTVYQ…ANASPVFVQA (76 aa). Solcar repeat units lie at residues 83–176, 188–281, and 289–375; these read AAFA…FKRL, KWFA…LKPV, and DSFF…LQVI. The next 5 membrane-spanning stretches (helical) occupy residues 85–112, 153–177, 186–206, 257–278, and 292–312; these read FATDFLMGGVSAAVSKTAAAPIERVKLL, TANVIRYFPTQALNFAFKDYFKRLF, YWKWFAGNLASGGGAGASSLL, FNISCVGIIVYRGLYFGMYDSL, and FASFALGWLITNGAGLASYPI. ADP-binding residues include arginine 158 and lysine 170. Position 316 (arginine 316) interacts with ADP. An important for transport activity region spans residues 316-321; sequence RRRMMM. Positions 316–321 match the Nucleotide carrier signature motif motif; the sequence is RRRMMM. A helical transmembrane segment spans residues 352 to 372; the sequence is AGANVLRAVAGAGVLAGYDKL.

This sequence belongs to the mitochondrial carrier (TC 2.A.29) family. Monomer.

The protein localises to the mitochondrion inner membrane. The enzyme catalyses ADP(in) + ATP(out) = ADP(out) + ATP(in). Its activity is regulated as follows. The matrix-open state (m-state) is inhibited by the membrane-permeable bongkrekic acid (BKA). The cytoplasmic-open state (c-state) is inhibited by the membrane-impermeable toxic inhibitor carboxyatractyloside (CATR). Its function is as follows. ADP:ATP antiporter that mediates import of ADP into the mitochondrial matrix for ATP synthesis, and export of ATP out to fuel the cell. Cycles between the cytoplasmic-open state (c-state) and the matrix-open state (m-state): operates by the alternating access mechanism with a single substrate-binding site intermittently exposed to either the cytosolic (c-state) or matrix (m-state) side of the inner mitochondrial membrane. This Solanum tuberosum (Potato) protein is ADP,ATP carrier protein, mitochondrial (ANT1).